We begin with the raw amino-acid sequence, 324 residues long: Carbonic anhydrase 15 (324 aa).

A signal peptide spans 1–18 (MWALDFLLSFLLIQLAAQ). The region spanning 23–293 (GTWCYDSQDP…LGGRRISASP (271 aa)) is the Alpha-carbonic anhydrase domain. H90 serves as the catalytic Proton acceptor. Zn(2+) contacts are provided by H122, H124, and H147. Residue Y155 is part of the active site. N-linked (GlcNAc...) asparagine glycans are attached at residues N184, N194, and N203. Residue 231 to 232 (TT) coordinates substrate. Residues 269 to 290 (LHPRPLTSNFRPQQPLGGRRIS) form a disordered region.

The protein belongs to the alpha-carbonic anhydrase family. The cofactor is Zn(2+).

Its subcellular location is the secreted. It carries out the reaction hydrogencarbonate + H(+) = CO2 + H2O. Repressed by coumarins. In terms of biological role, reversible hydration of carbon dioxide. This is Carbonic anhydrase 15 (Ca15) from Mus musculus (Mouse).